An 875-amino-acid polypeptide reads, in one-letter code: Alanine--tRNA ligase (875 aa).

The Zn(2+) site is built by His-567, His-571, Cys-669, and His-673.

The protein belongs to the class-II aminoacyl-tRNA synthetase family. Zn(2+) serves as cofactor.

It is found in the cytoplasm. It carries out the reaction tRNA(Ala) + L-alanine + ATP = L-alanyl-tRNA(Ala) + AMP + diphosphate. Catalyzes the attachment of alanine to tRNA(Ala) in a two-step reaction: alanine is first activated by ATP to form Ala-AMP and then transferred to the acceptor end of tRNA(Ala). Also edits incorrectly charged Ser-tRNA(Ala) and Gly-tRNA(Ala) via its editing domain. This is Alanine--tRNA ligase from Geobacter sulfurreducens (strain ATCC 51573 / DSM 12127 / PCA).